Here is a 310-residue protein sequence, read N- to C-terminus: Malate dehydrogenase (310 aa).

NAD(+) is bound by residues 7 to 12 and aspartate 32; that span reads GAGNVG. Substrate is bound by residues arginine 81 and arginine 87. NAD(+) is bound by residues asparagine 94 and 117 to 119; that span reads VSN. Substrate is bound by residues asparagine 119 and arginine 150. The active-site Proton acceptor is the histidine 174.

This sequence belongs to the LDH/MDH superfamily. MDH type 3 family.

The enzyme catalyses (S)-malate + NAD(+) = oxaloacetate + NADH + H(+). Functionally, catalyzes the reversible oxidation of malate to oxaloacetate. In Chlorobium chlorochromatii (strain CaD3), this protein is Malate dehydrogenase.